We begin with the raw amino-acid sequence, 229 residues long: Putative N-acetylmannosamine-6-phosphate 2-epimerase (229 aa).

The protein belongs to the NanE family.

The enzyme catalyses an N-acyl-D-glucosamine 6-phosphate = an N-acyl-D-mannosamine 6-phosphate. It functions in the pathway amino-sugar metabolism; N-acetylneuraminate degradation; D-fructose 6-phosphate from N-acetylneuraminate: step 3/5. In terms of biological role, converts N-acetylmannosamine-6-phosphate (ManNAc-6-P) to N-acetylglucosamine-6-phosphate (GlcNAc-6-P). The polypeptide is Putative N-acetylmannosamine-6-phosphate 2-epimerase (Escherichia coli O7:K1 (strain IAI39 / ExPEC)).